A 239-amino-acid chain; its full sequence is MTRDEARAKIIFALDVNEFSDVEKWADLLSPHVGMFKVGKQLYTACGPAVVRMIQKYGGEVFLDLKYHDIPNTVAMASLEAARMGVKLFNLHALGGYEMMAKTVETLDKEFKGEERGKVLAVTILTSSNEQTLQEVGINLPVPEMVVKLAALAKKAGIDGVVASPQEVPLIREACGNDFLIVTPGVRPAFAAADDQKRIMTPAEAVKSGADYLVIGRPIAAAPNPAEAAQAIVAEIVAG.

Substrate-binding positions include aspartate 15, lysine 37, 64–73 (DLKYHDIPNT), threonine 126, arginine 187, glutamine 196, glycine 216, and arginine 217. Lysine 66 acts as the Proton donor in catalysis.

It belongs to the OMP decarboxylase family. Type 1 subfamily. Homodimer.

The catalysed reaction is orotidine 5'-phosphate + H(+) = UMP + CO2. The protein operates within pyrimidine metabolism; UMP biosynthesis via de novo pathway; UMP from orotate: step 2/2. In terms of biological role, catalyzes the decarboxylation of orotidine 5'-monophosphate (OMP) to uridine 5'-monophosphate (UMP). This Geotalea daltonii (strain DSM 22248 / JCM 15807 / FRC-32) (Geobacter daltonii) protein is Orotidine 5'-phosphate decarboxylase.